A 535-amino-acid polypeptide reads, in one-letter code: Probable galacturonosyltransferase 12 (535 aa).

The Cytoplasmic segment spans residues 1-37 (MQLHISPSLRHVTVVTGKGLREFIKVKVGSRRFSYQM). The chain crosses the membrane as a helical; Signal-anchor for type II membrane protein span at residues 38–58 (VFYSLLFFTFLLRFVFVLSTV). The Lumenal segment spans residues 59–535 (DTIDGDPSPC…FIKSCHIRAS (477 aa)). N-linked (GlcNAc...) asparagine glycosylation is found at N397 and N430.

It belongs to the glycosyltransferase 8 family. Highly expressed in stems. Detected in roots, inflorescences, siliques, and leaves. Expressed in cells undergoing secondary wall thickening, including interfascicular fibers and primary and secondary xylem.

It localises to the golgi apparatus membrane. Its pathway is glycan metabolism; pectin biosynthesis. Involved in pectin assembly and/or distribution, and in the synthesis of secondary wall glucuronoxylan. Probably involved in the synthesis of the glycosyl sequence at the glucuronoxylan reducing end. May be involved in synthesis of a complex glycan primer for xylan synthesis. In Arabidopsis thaliana (Mouse-ear cress), this protein is Probable galacturonosyltransferase 12 (GAUT12).